The chain runs to 329 residues: Vomeronasal type-1 receptor 43 (329 aa).

Topologically, residues 1–32 (MSKILFFSPCSLFSHTMNKNSRLHTNSNIGNT) are extracellular. A helical transmembrane segment spans residues 33–53 (FFSEIGIGITGNSFLLLYHIL). Over 54-65 (KFIRGHRPRLTD) the chain is Cytoplasmic. A helical transmembrane segment spans residues 66 to 86 (LPIGLLSLIHLLMLLVAAFIA). The Extracellular segment spans residues 87 to 109 (TDIFISRRGWDDIICKFLVYLYR). Cys-101 and Cys-188 are oxidised to a cystine. Residues 110 to 130 (VLRGLSLCTTSMLSVLQAIIL) traverse the membrane as a helical segment. Residues 131–147 (SPRSSCLSKFKHISLHH) are Cytoplasmic-facing. A helical transmembrane segment spans residues 148-168 (ILCAILFLSVLYMLISSQLLV). The Extracellular portion of the chain corresponds to 169–209 (SIIATPNLTTNDLTYVTQSCSILPLSYLVESINSTLLAIRE). Residues Asn-175 and Asn-201 are each glycosylated (N-linked (GlcNAc...) asparagine). The chain crosses the membrane as a helical span at residues 210–230 (YFLISLMFLSTWYIVALLCMH). The Cytoplasmic portion of the chain corresponds to 231–255 (RKQTQHLQETRLSLKKSPEQSATQT). The helical transmembrane segment at 256–276 (ILMLMTFFVLMTIYDNIVSCL) threads the bilayer. The Extracellular segment spans residues 277 to 285 (RTMLLNDPT). The helical transmembrane segment at 286–306 (SYSIELFMIHIYATVSPFVFM) threads the bilayer. Topologically, residues 307-329 (SNEKHIVNFLRSMGKRMINLNLH) are cytoplasmic.

This sequence belongs to the G-protein coupled receptor 1 family.

Its subcellular location is the cell membrane. In terms of biological role, putative pheromone receptor implicated in the regulation of social and reproductive behavior. This Mus musculus (Mouse) protein is Vomeronasal type-1 receptor 43 (Vmn1r43).